The sequence spans 251 residues: Ubiquinone/menaquinone biosynthesis C-methyltransferase UbiE (251 aa).

S-adenosyl-L-methionine is bound by residues Thr-74, Asp-95, and 123 to 124 (NA).

Belongs to the class I-like SAM-binding methyltransferase superfamily. MenG/UbiE family.

The catalysed reaction is a 2-demethylmenaquinol + S-adenosyl-L-methionine = a menaquinol + S-adenosyl-L-homocysteine + H(+). It catalyses the reaction a 2-methoxy-6-(all-trans-polyprenyl)benzene-1,4-diol + S-adenosyl-L-methionine = a 5-methoxy-2-methyl-3-(all-trans-polyprenyl)benzene-1,4-diol + S-adenosyl-L-homocysteine + H(+). Its pathway is quinol/quinone metabolism; menaquinone biosynthesis; menaquinol from 1,4-dihydroxy-2-naphthoate: step 2/2. It participates in cofactor biosynthesis; ubiquinone biosynthesis. Functionally, methyltransferase required for the conversion of demethylmenaquinol (DMKH2) to menaquinol (MKH2) and the conversion of 2-polyprenyl-6-methoxy-1,4-benzoquinol (DDMQH2) to 2-polyprenyl-3-methyl-6-methoxy-1,4-benzoquinol (DMQH2). The polypeptide is Ubiquinone/menaquinone biosynthesis C-methyltransferase UbiE (Shewanella oneidensis (strain ATCC 700550 / JCM 31522 / CIP 106686 / LMG 19005 / NCIMB 14063 / MR-1)).